The sequence spans 362 residues: Outer membrane porin protein OmpD (362 aa).

Residues 1 to 21 (MKLKLVAVAVTSLLAAGVVNA) form the signal peptide.

Belongs to the Gram-negative porin family. In terms of assembly, homotrimer.

It is found in the cell outer membrane. Forms pores that allow passive diffusion of small molecules across the outer membrane. The protein is Outer membrane porin protein OmpD (ompD) of Salmonella choleraesuis (strain SC-B67).